A 174-amino-acid polypeptide reads, in one-letter code: UPF0113 protein AF_0058 (174 aa).

Residues 87–161 (RNRVWVNERG…KVFVENLVDR (75 aa)) form the PUA domain.

This sequence belongs to the UPF0113 family.

The sequence is that of UPF0113 protein AF_0058 from Archaeoglobus fulgidus (strain ATCC 49558 / DSM 4304 / JCM 9628 / NBRC 100126 / VC-16).